The sequence spans 56 residues: Photosystem II reaction center X protein (56 aa).

Residues I27–W47 form a helical membrane-spanning segment.

It belongs to the PsbX family. Type 2 subfamily. In terms of assembly, PSII consists of a core antenna complex that captures photons, and an electron transfer chain that converts photonic excitation into a charge separation. PSII forms dimeric complexes.

The protein resides in the cellular thylakoid membrane. In terms of biological role, involved in the binding and/or turnover of quinones at the Q(B) site of Photosystem II. The chain is Photosystem II reaction center X protein from Prochlorococcus marinus (strain NATL2A).